The following is a 316-amino-acid chain: Cobalamin biosynthesis protein CobD (316 aa).

5 helical membrane-spanning segments follow: residues 45-65, 78-100, 151-171, 209-229, and 291-311; these read FSPY…ALGV, PVLY…SLAF, DGVI…AMTY, LTWL…KGAL, and ISLL…FYLV.

The protein belongs to the CobD/CbiB family.

It is found in the cell membrane. It functions in the pathway cofactor biosynthesis; adenosylcobalamin biosynthesis. In terms of biological role, converts cobyric acid to cobinamide by the addition of aminopropanol on the F carboxylic group. The protein is Cobalamin biosynthesis protein CobD of Streptococcus sanguinis (strain SK36).